Reading from the N-terminus, the 544-residue chain is CTP synthase (544 aa).

Residues 1 to 265 form an amidoligase domain region; it reads MARFIFITGG…DKAVLSAFGL (265 aa). Residue serine 13 coordinates CTP. Position 13 (serine 13) interacts with UTP. 14-19 contacts ATP; that stretch reads SLGKGL. Tyrosine 54 contacts L-glutamine. Aspartate 71 contributes to the ATP binding site. The Mg(2+) site is built by aspartate 71 and glutamate 139. Residues 146-148, 186-191, and lysine 222 contribute to the CTP site; these read DIE and KTKPTQ. UTP contacts are provided by residues 186-191 and lysine 222; that span reads KTKPTQ. Residues 291–543 enclose the Glutamine amidotransferase type-1 domain; sequence TIGVVGKYVG…VAAALKQSRL (253 aa). Glycine 355 contacts L-glutamine. The active-site Nucleophile; for glutamine hydrolysis is the cysteine 382. L-glutamine is bound by residues 383 to 386, glutamate 406, and arginine 471; that span reads LGMQ. Residues histidine 516 and glutamate 518 contribute to the active site.

It belongs to the CTP synthase family. As to quaternary structure, homotetramer.

It carries out the reaction UTP + L-glutamine + ATP + H2O = CTP + L-glutamate + ADP + phosphate + 2 H(+). The catalysed reaction is L-glutamine + H2O = L-glutamate + NH4(+). The enzyme catalyses UTP + NH4(+) + ATP = CTP + ADP + phosphate + 2 H(+). It participates in pyrimidine metabolism; CTP biosynthesis via de novo pathway; CTP from UDP: step 2/2. Allosterically activated by GTP, when glutamine is the substrate; GTP has no effect on the reaction when ammonia is the substrate. The allosteric effector GTP functions by stabilizing the protein conformation that binds the tetrahedral intermediate(s) formed during glutamine hydrolysis. Inhibited by the product CTP, via allosteric rather than competitive inhibition. Functionally, catalyzes the ATP-dependent amination of UTP to CTP with either L-glutamine or ammonia as the source of nitrogen. Regulates intracellular CTP levels through interactions with the four ribonucleotide triphosphates. This is CTP synthase from Zymomonas mobilis subsp. mobilis (strain ATCC 31821 / ZM4 / CP4).